A 410-amino-acid polypeptide reads, in one-letter code: Aminopeptidase AmpS (410 aa).

Residues Glu250, Glu316, Glu340, His345, His378, and Asp380 each contribute to the a divalent metal cation site.

Belongs to the peptidase M29 family. The cofactor is Co(2+). It depends on Zn(2+) as a cofactor. Requires Mg(2+) as cofactor.

Metal-dependent exopeptidase. This chain is Aminopeptidase AmpS (ampS), found in Bacillus subtilis (strain 168).